Reading from the N-terminus, the 443-residue chain is Xaa-Pro dipeptidase (443 aa).

Mn(2+) contacts are provided by aspartate 246, aspartate 257, histidine 339, glutamate 384, and glutamate 423.

This sequence belongs to the peptidase M24B family. Bacterial-type prolidase subfamily. Requires Mn(2+) as cofactor.

The catalysed reaction is Xaa-L-Pro dipeptide + H2O = an L-alpha-amino acid + L-proline. Functionally, splits dipeptides with a prolyl residue in the C-terminal position. The chain is Xaa-Pro dipeptidase from Salmonella arizonae (strain ATCC BAA-731 / CDC346-86 / RSK2980).